The chain runs to 386 residues: MDIVLEICDYYLFDKVYADVFPKDGAVHEFLKPAIQSFSQIDFPSLPNLDSFDTNSTLISSNNFNISNVNPATIPSYLFSKIASYQDKSEIYGLAPKFFPATDFINTSFLARSNIFRETLSLFIITTIFGWLLYFIVAYLSYVFVFDKKIFNHPRYLKNQMSLEIKRATTAIPVMVLLTIPFFLLELNGYSFLYLDINECTGGYKAILWQIPKFILFTDCGIYFLHRWLHWPSVYKVLHKPHHKWIVCTPFASHAFHPVDGFFQSLPYHLYPLLFPLHKVLYLFLFTFVNFWTVMIHDGSYWSNDPVVNGTACHTVHHLYFNYNYGQFTTLWDRLGNSYRRPDDSLFVKDAKAEEEKKIWKEQTRKMEEIRGEVEGKVDDREYVEQ.

3 consecutive transmembrane segments (helical) span residues 120-140 (LSLF…VAYL), 172-192 (IPVM…GYSF), and 206-226 (AILW…YFLH). The Fatty acid hydroxylase domain maps to 214–337 (FILFTDCGIY…FTTLWDRLGN (124 aa)). The Histidine box-1 motif lies at 226-230 (HRWLH). The short motif at 239 to 243 (HKPHH) is the Histidine box-2 element. A helical membrane pass occupies residues 272 to 292 (PLLFPLHKVLYLFLFTFVNFW). Positions 314-318 (HTVHH) match the Histidine box-3 motif.

It belongs to the sterol desaturase family. The cofactor is Fe cation.

It localises to the endoplasmic reticulum membrane. It catalyses the reaction a Delta(7)-sterol + 2 Fe(II)-[cytochrome b5] + O2 + 2 H(+) = a Delta(5),Delta(7)-sterol + 2 Fe(III)-[cytochrome b5] + 2 H2O. It participates in steroid metabolism; ergosterol biosynthesis; ergosterol from zymosterol: step 3/5. Its function is as follows. C-5 sterol desaturase; part of the third module of ergosterol biosynthesis pathway that includes the late steps of the pathwa. ERG3 catalyzes the introduction of a C-5 double bond in the B ring to produce 5-dehydroepisterol. The third module or late pathway involves the ergosterol synthesis itself through consecutive reactions that mainly occur in the endoplasmic reticulum (ER) membrane. Firstly, the squalene synthase ERG9 catalyzes the condensation of 2 farnesyl pyrophosphate moieties to form squalene, which is the precursor of all steroids. Squalene synthase is crucial for balancing the incorporation of farnesyl diphosphate (FPP) into sterol and nonsterol isoprene synthesis. Secondly, the squalene epoxidase ERG1 catalyzes the stereospecific oxidation of squalene to (S)-2,3-epoxysqualene, which is considered to be a rate-limiting enzyme in steroid biosynthesis. Then, the lanosterol synthase ERG7 catalyzes the cyclization of (S)-2,3 oxidosqualene to lanosterol, a reaction that forms the sterol core. In the next steps, lanosterol is transformed to zymosterol through a complex process involving various demethylation, reduction and desaturation reactions. The lanosterol 14-alpha-demethylase ERG11 (also known as CYP51) catalyzes C14-demethylation of lanosterol to produce 4,4'-dimethyl cholesta-8,14,24-triene-3-beta-ol, which is critical for ergosterol biosynthesis. The C-14 reductase ERG24 reduces the C14=C15 double bond of 4,4-dimethyl-cholesta-8,14,24-trienol to produce 4,4-dimethyl-cholesta-8,24-dienol. 4,4-dimethyl-cholesta-8,24-dienol is substrate of the C-4 demethylation complex ERG25-ERG26-ERG27 in which ERG25 catalyzes the three-step monooxygenation required for the demethylation of 4,4-dimethyl and 4alpha-methylsterols, ERG26 catalyzes the oxidative decarboxylation that results in a reduction of the 3-beta-hydroxy group at the C-3 carbon to an oxo group, and ERG27 is responsible for the reduction of the keto group on the C-3. ERG28 has a role as a scaffold to help anchor ERG25, ERG26 and ERG27 to the endoplasmic reticulum and ERG29 regulates the activity of the iron-containing C4-methylsterol oxidase ERG25. Then, the sterol 24-C-methyltransferase ERG6 catalyzes the methyl transfer from S-adenosyl-methionine to the C-24 of zymosterol to form fecosterol. The C-8 sterol isomerase ERG2 catalyzes the reaction which results in unsaturation at C-7 in the B ring of sterols and thus converts fecosterol to episterol. The sterol-C5-desaturase ERG3 then catalyzes the introduction of a C-5 double bond in the B ring to produce 5-dehydroepisterol. The C-22 sterol desaturase ERG5 further converts 5-dehydroepisterol into ergosta-5,7,22,24(28)-tetraen-3beta-ol by forming the C-22(23) double bond in the sterol side chain. Finally, ergosta-5,7,22,24(28)-tetraen-3beta-ol is substrate of the C-24(28) sterol reductase ERG4 to produce ergosterol. The sequence is that of Delta(7)-sterol 5(6)-desaturase ERG3 from Candida albicans (strain SC5314 / ATCC MYA-2876) (Yeast).